The primary structure comprises 1052 residues: CCAAT/enhancer-binding protein zeta (1052 aa).

Disordered stretches follow at residues 1-40 (MSAD…KNGF), 122-158 (VENK…VSKA), and 621-677 (SQLD…AEKP). Acidic residues predominate over residues 23 to 34 (EDPDEEDEEDGD). Residues 122–150 (VENKKQKATEGKKTSEKKVKNKTVAEQRP) show a composition bias toward basic and acidic residues. The segment covering 627–643 (PESDEENFVDVGDDSDD) has biased composition (acidic residues). Phosphoserine occurs at positions 629 and 641. Residues 644–677 (EKFTDADKGTATDAVKEVESKETEPESSAEAEKP) are compositionally biased toward basic and acidic residues. S837 is modified (phosphoserine). The interval 876–969 (KGAKADLEDS…QGQKKKKKSF (94 aa)) is disordered. A compositionally biased stretch (acidic residues) spans 883–932 (EDSESSDGELGDLDDDEVSLGSMNDEDFEIDEDGGTFMDVSDDESEDAPE). Residues S958, S972, and S977 each carry the phosphoserine modification. The interval 1032-1052 (KKKKNFRKKMKAPQKPKRQRK) is disordered.

It belongs to the CBF/MAK21 family. Ubiquitous.

It localises to the nucleus. In terms of biological role, stimulates transcription from the HSP70 promoter. The chain is CCAAT/enhancer-binding protein zeta (Cebpz) from Mus musculus (Mouse).